Here is a 340-residue protein sequence, read N- to C-terminus: GTP-binding protein REM 2 (340 aa).

Over residues methionine 1 to threonine 13 the composition is skewed to acidic residues. Residues methionine 1–alanine 107 are disordered. Serine 27 is modified (phosphoserine). The span at leucine 40–arginine 53 shows a compositional bias: basic and acidic residues. A compositionally biased stretch (low complexity) spans serine 93 to glycine 104. GTP contacts are provided by residues glycine 121–serine 128, asparagine 229–aspartate 232, and alanine 260–alanine 261. Residues arginine 283–leucine 308 are disordered. Positions proline 293–proline 302 are enriched in pro residues. Serine 295 bears the Phosphoserine mark.

Belongs to the small GTPase superfamily. RGK family.

Its subcellular location is the cell membrane. Binds GTP saturably and exhibits a low intrinsic rate of GTP hydrolysis. The protein is GTP-binding protein REM 2 (REM2) of Homo sapiens (Human).